The sequence spans 316 residues: 4-hydroxy-3-methylbut-2-enyl diphosphate reductase (316 aa).

Cysteine 12 lines the [4Fe-4S] cluster pocket. (2E)-4-hydroxy-3-methylbut-2-enyl diphosphate-binding residues include histidine 41 and histidine 74. Residues histidine 41 and histidine 74 each contribute to the dimethylallyl diphosphate site. Residues histidine 41 and histidine 74 each coordinate isopentenyl diphosphate. Cysteine 96 serves as a coordination point for [4Fe-4S] cluster. Histidine 124 is a binding site for (2E)-4-hydroxy-3-methylbut-2-enyl diphosphate. Histidine 124 contributes to the dimethylallyl diphosphate binding site. Position 124 (histidine 124) interacts with isopentenyl diphosphate. Glutamate 126 (proton donor) is an active-site residue. Residue threonine 169 coordinates (2E)-4-hydroxy-3-methylbut-2-enyl diphosphate. Cysteine 199 is a [4Fe-4S] cluster binding site. Serine 227, serine 228, asparagine 229, and serine 271 together coordinate (2E)-4-hydroxy-3-methylbut-2-enyl diphosphate. Serine 227, serine 228, asparagine 229, and serine 271 together coordinate dimethylallyl diphosphate. Residues serine 227, serine 228, asparagine 229, and serine 271 each coordinate isopentenyl diphosphate.

This sequence belongs to the IspH family. The cofactor is [4Fe-4S] cluster.

The catalysed reaction is isopentenyl diphosphate + 2 oxidized [2Fe-2S]-[ferredoxin] + H2O = (2E)-4-hydroxy-3-methylbut-2-enyl diphosphate + 2 reduced [2Fe-2S]-[ferredoxin] + 2 H(+). The enzyme catalyses dimethylallyl diphosphate + 2 oxidized [2Fe-2S]-[ferredoxin] + H2O = (2E)-4-hydroxy-3-methylbut-2-enyl diphosphate + 2 reduced [2Fe-2S]-[ferredoxin] + 2 H(+). It participates in isoprenoid biosynthesis; dimethylallyl diphosphate biosynthesis; dimethylallyl diphosphate from (2E)-4-hydroxy-3-methylbutenyl diphosphate: step 1/1. Its pathway is isoprenoid biosynthesis; isopentenyl diphosphate biosynthesis via DXP pathway; isopentenyl diphosphate from 1-deoxy-D-xylulose 5-phosphate: step 6/6. In terms of biological role, catalyzes the conversion of 1-hydroxy-2-methyl-2-(E)-butenyl 4-diphosphate (HMBPP) into a mixture of isopentenyl diphosphate (IPP) and dimethylallyl diphosphate (DMAPP). Acts in the terminal step of the DOXP/MEP pathway for isoprenoid precursor biosynthesis. The protein is 4-hydroxy-3-methylbut-2-enyl diphosphate reductase of Stenotrophomonas maltophilia (strain R551-3).